The primary structure comprises 299 residues: Non-structural protein NS-S (299 aa).

An involved in inclusion bodies formation region spans residues 66-69 (PNNP). The interaction with host TNIP2 stretch occupies residues 148 to 220 (FEGDMVIDSC…KPLLDSLYFA (73 aa)).

Belongs to the Bandavirus NS-S protein family. As to quaternary structure, interacts with host TBK1; this interaction antagonizes TBK1 phosphorylation and inhibits TBK1-IRF3 interaction. Interacts with host STAT2; this interaction blocks the nuclear translocation and activation of host STAT2. Interacts with host TNIP2.

It is found in the host cytoplasm. Plays a role in the inhibition of host RLR-induced interferon-beta activation by inhibiting the phosphorylation of TANK-binding kinase 1/TBK1, thereby blocking IRF3 activation and preventing the establishment of an antiviral state. Also blocks IFN-triggered nuclear translocation and activation of host STAT2. The sequence is that of Non-structural protein NS-S (NSS) from Alces americanus (American moose).